A 337-amino-acid chain; its full sequence is Phosphoribosylformylglycinamidine cyclo-ligase (337 aa).

This sequence belongs to the AIR synthase family.

Its subcellular location is the cytoplasm. The catalysed reaction is 2-formamido-N(1)-(5-O-phospho-beta-D-ribosyl)acetamidine + ATP = 5-amino-1-(5-phospho-beta-D-ribosyl)imidazole + ADP + phosphate + H(+). The protein operates within purine metabolism; IMP biosynthesis via de novo pathway; 5-amino-1-(5-phospho-D-ribosyl)imidazole from N(2)-formyl-N(1)-(5-phospho-D-ribosyl)glycinamide: step 2/2. The sequence is that of Phosphoribosylformylglycinamidine cyclo-ligase from Pseudothermotoga lettingae (strain ATCC BAA-301 / DSM 14385 / NBRC 107922 / TMO) (Thermotoga lettingae).